We begin with the raw amino-acid sequence, 338 residues long: MEDIIFGKRSNVFDVNPENTVFVLIAGTSEVSTVPGITSAGATPELTRLTPAIDSEIIGEGKCLSSKDPPMTPEGIPTPAIVTKAILSLTNIRYIIVNGGFYAKPKTPFIETGLKPSNNPAVKTAIEDLDAAIHAGEHIGRLLDGVFENIILAESVPGGTTTAYAVLKAIGINAKTSSSMKEDPFSIKEKIAEMSFRRKLEKSPLGAVKEYGDNMMAVSLGISSSVKRSKIIFGGGTQMATVMYLDRLINGMRDRYISTTGWVYYHRTELFSDLGLSDYLAVSAMDFSGMKHPGLRYYQYGHVREGTGMGAAFLLARLMNFEAEAIYKSVDDFYEQFI.

Belongs to the UPF0284 family.

The sequence is that of UPF0284 protein TV0153 from Thermoplasma volcanium (strain ATCC 51530 / DSM 4299 / JCM 9571 / NBRC 15438 / GSS1).